A 642-amino-acid polypeptide reads, in one-letter code: MGLGQSTEQAGHSPEQLSHVLAERFATKCFTPLELTHFKDNFFSRAIDQEGIKYWSEKILSDFLGIPDSSDSHCPLDAGPVLFRMVSYLGAFPFQNTMAPSVLTFEAMVKVVVLLTERYGKVLRRARRDRVKLLFGSLADVGRRGAGQPPDENADNKEEDKSSTAKSHATGFAVDDPANDNYEDDEDDDDLVLAALESLDAIDVFKHDSRVDKTVYEARISVATFRRLLMLLIVIAPLSSLEPVKKYTSDLNEERMDNVRQEADSILAAFDLNKSADGISFQSFSEIVSGSLPYLFDPLTTLFEHLLFSKNLDLSQKRGGTETTIVADTAEEVSESPLSSPSSIMLPGSFESTILKPSAISHLSFFLSSPATDVNLLRGNMRLHPVFSTVAHGSSLTSFSHNVLTWNSGTLLLLEGAVTESSDRGVGTITLGAYLPQHWKSGPLAHSPSRPFDSLSLPCLFELSPKHLLMQGNTSPSVHKPNAPSAYFSTNTGIAIGCQIPPPSRSQQFEPTPLGAGSLIIDASLESATFYASPIGHNGVFLPSPSVSKNGSETTSKMQIDIYTLEVWGLVPDPSDETLTEPGHNAIERQRARWDFEAREAERRRSLNLKAGAGDSAMEGARWLLETAGLIGDRPGRSGGSM.

Residues 143 to 186 (RRGAGQPPDENADNKEEDKSSTAKSHATGFAVDDPANDNYEDDE) form a disordered region. Basic and acidic residues predominate over residues 154–163 (ADNKEEDKSS). Positions 177–186 (PANDNYEDDE) are enriched in acidic residues. Residues 353–571 (TILKPSAISH…IYTLEVWGLV (219 aa)) form the TLDc domain.

It belongs to the RTC5 family.

The protein resides in the cytoplasm. Its function is as follows. May be involved in a process influencing telomere capping. This is Restriction of telomere capping protein 5 (rtc5) from Aspergillus clavatus (strain ATCC 1007 / CBS 513.65 / DSM 816 / NCTC 3887 / NRRL 1 / QM 1276 / 107).